The following is an 87-amino-acid chain: Small ribosomal subunit protein uS15c (87 aa).

This sequence belongs to the universal ribosomal protein uS15 family. As to quaternary structure, part of the 30S ribosomal subunit.

The protein localises to the plastid. The protein resides in the chloroplast. This is Small ribosomal subunit protein uS15c (rps15) from Oenothera argillicola (Appalachian evening primrose).